The following is a 318-amino-acid chain: Olfactory receptor 5G26 (318 aa).

The Extracellular portion of the chain corresponds to 1-28; that stretch reads MMHRNQTVVTEFFFTGLTSSFHLQIVLF. N-linked (GlcNAc...) asparagine glycosylation occurs at Asn-5. A helical transmembrane segment spans residues 29–49; it reads LTFLCVYLATLLGNLGMIILI. At 50–56 the chain is on the cytoplasmic side; that stretch reads HLDTRLH. The helical transmembrane segment at 57–77 threads the bilayer; the sequence is IPMYFFLSHLSFVDACSSSVI. Residues 78–93 lie on the Extracellular side of the membrane; that stretch reads SPKMLSDMFVDKKVIS. The chain crosses the membrane as a helical span at residues 94-114; sequence FLGCAIQLCLFSQFVVTECFL. Cys-97 and Cys-189 form a disulfide bridge. The Cytoplasmic segment spans residues 115–144; sequence LASMAYDRYVAICKPLLYTLIMSQRVCVQL. The helical transmembrane segment at 145–165 threads the bilayer; that stretch reads VIGPYSIGFVSTMVHIISAFV. The Extracellular segment spans residues 166-198; that stretch reads LPYCGPNLINHFFCDLLPVLSLACANTQMKKRL. A helical transmembrane segment spans residues 199–219; the sequence is LFIVAGILGVFSGIIILVSYV. At 220–239 the chain is on the cytoplasmic side; that stretch reads YIAITILKISSADGRRKAFS. The helical transmembrane segment at 240 to 260 threads the bilayer; that stretch reads TCSSHLTAVSILYGTLFFIYV. The Extracellular segment spans residues 261-271; the sequence is RPSSSFSLDIN. Residues 272 to 292 form a helical membrane-spanning segment; the sequence is KVVSLFYTTVIPMLNPFIYSL. Over 293–318 the chain is Cytoplasmic; that stretch reads RNKEVKDALIRTFEKQFCYSFQDKIL.

The protein belongs to the G-protein coupled receptor 1 family.

The protein resides in the cell membrane. Functionally, potential odorant receptor. The protein is Olfactory receptor 5G26 of Mus musculus (Mouse).